Here is a 514-residue protein sequence, read N- to C-terminus: Peptide chain release factor 3 (514 aa).

Residues 8–268 (KKRRTFAIIS…TFLKFAPEPH (261 aa)) enclose the tr-type G domain. GTP-binding positions include 17–24 (SHPDAGKT), 85–89 (DTPGH), and 139–142 (NKLD).

Belongs to the TRAFAC class translation factor GTPase superfamily. Classic translation factor GTPase family. PrfC subfamily.

The protein localises to the cytoplasm. Increases the formation of ribosomal termination complexes and stimulates activities of RF-1 and RF-2. It binds guanine nucleotides and has strong preference for UGA stop codons. It may interact directly with the ribosome. The stimulation of RF-1 and RF-2 is significantly reduced by GTP and GDP, but not by GMP. The protein is Peptide chain release factor 3 of Streptococcus pneumoniae (strain Hungary19A-6).